Here is a 277-residue protein sequence, read N- to C-terminus: 4-hydroxy-tetrahydrodipicolinate reductase (277 aa).

Residues Gly-11–Met-16 and Gly-110–Thr-112 each bind NAD(+). The Proton donor/acceptor role is filled by His-166. A (S)-2,3,4,5-tetrahydrodipicolinate-binding site is contributed by His-167. Catalysis depends on Lys-170, which acts as the Proton donor. Gly-176–Thr-177 contacts (S)-2,3,4,5-tetrahydrodipicolinate.

This sequence belongs to the DapB family.

Its subcellular location is the cytoplasm. It catalyses the reaction (S)-2,3,4,5-tetrahydrodipicolinate + NAD(+) + H2O = (2S,4S)-4-hydroxy-2,3,4,5-tetrahydrodipicolinate + NADH + H(+). The enzyme catalyses (S)-2,3,4,5-tetrahydrodipicolinate + NADP(+) + H2O = (2S,4S)-4-hydroxy-2,3,4,5-tetrahydrodipicolinate + NADPH + H(+). It functions in the pathway amino-acid biosynthesis; L-lysine biosynthesis via DAP pathway; (S)-tetrahydrodipicolinate from L-aspartate: step 4/4. Its function is as follows. Catalyzes the conversion of 4-hydroxy-tetrahydrodipicolinate (HTPA) to tetrahydrodipicolinate. The polypeptide is 4-hydroxy-tetrahydrodipicolinate reductase (Parasynechococcus marenigrum (strain WH8102)).